The following is a 77-amino-acid chain: DNA-directed RNA polymerase subunit epsilon (77 aa).

Belongs to the RNA polymerase subunit epsilon family. As to quaternary structure, RNAP is composed of a core of 2 alpha, a beta and a beta' subunit. The core is associated with a delta subunit, and at least one of epsilon or omega. When a sigma factor is associated with the core the holoenzyme is formed, which can initiate transcription.

It carries out the reaction RNA(n) + a ribonucleoside 5'-triphosphate = RNA(n+1) + diphosphate. Its function is as follows. A non-essential component of RNA polymerase (RNAP). In Streptococcus pneumoniae (strain Hungary19A-6), this protein is DNA-directed RNA polymerase subunit epsilon.